Consider the following 43-residue polypeptide: Alpha-conotoxin-like Leo-A1 (43 aa).

A propeptide spanning residues 1-26 (LTLDRASDDTDVAAEIMSGLIALAID) is cleaved from the precursor. 2 cysteine pairs are disulfide-bonded: Cys28–Cys34 and Cys29–Cys42. Positions 30–32 (SDS) are lacks the Ser-Xaa-Pro motif that is crucial for potent interaction with nAChR.

Belongs to the conotoxin A superfamily. In terms of tissue distribution, expressed by the venom duct.

The protein localises to the secreted. In terms of biological role, alpha-conotoxins act on postsynaptic membranes, they bind to the nicotinic acetylcholine receptors (nAChR) and thus inhibit them. Has possibly a distinct nAChR binding mode from other alpha-conotoxins, due to a different three residue motif (lacks the Ser-Xaa-Pro motif). In Conus leopardus (Leopard cone), this protein is Alpha-conotoxin-like Leo-A1.